A 361-amino-acid chain; its full sequence is L-threonine 3-dehydrogenase (361 aa).

Residue Cys38 participates in Zn(2+) binding. Active-site charge relay system residues include Thr40 and His43. Residues His63, Glu64, Cys93, Cys96, Cys99, and Cys107 each contribute to the Zn(2+) site. Residues Ile175, Asp195, Arg200, 262–264, and 286–287 contribute to the NAD(+) site; these read LGI and IY.

This sequence belongs to the zinc-containing alcohol dehydrogenase family. Homotetramer. Requires Zn(2+) as cofactor.

It is found in the cytoplasm. The catalysed reaction is L-threonine + NAD(+) = (2S)-2-amino-3-oxobutanoate + NADH + H(+). It functions in the pathway amino-acid degradation; L-threonine degradation via oxydo-reductase pathway; glycine from L-threonine: step 1/2. Functionally, catalyzes the NAD(+)-dependent oxidation of L-threonine to 2-amino-3-ketobutyrate. The chain is L-threonine 3-dehydrogenase from Pectobacterium atrosepticum (strain SCRI 1043 / ATCC BAA-672) (Erwinia carotovora subsp. atroseptica).